The sequence spans 266 residues: Vitamin B12-binding protein (266 aa).

The signal sequence occupies residues 1–22 (MAKSLFRALVALSFLAPLWLNA). Positions 25–266 (RVITLSPANT…QLCNALSQVD (242 aa)) constitute a Fe/B12 periplasmic-binding domain. Cyanocob(III)alamin contacts are provided by residues tyrosine 50 and 242–246 (DWFER). Residues cysteine 183 and cysteine 259 are joined by a disulfide bond.

This sequence belongs to the BtuF family. The complex is composed of two ATP-binding proteins (BtuD), two transmembrane proteins (BtuC) and a solute-binding protein (BtuF).

It is found in the periplasm. Part of the ABC transporter complex BtuCDF involved in vitamin B12 import. Binds vitamin B12 and delivers it to the periplasmic surface of BtuC. The sequence is that of Vitamin B12-binding protein from Escherichia coli O6:H1 (strain CFT073 / ATCC 700928 / UPEC).